We begin with the raw amino-acid sequence, 649 residues long: Echinoderm microtubule-associated protein-like 2 (649 aa).

The interval 10–649 (KEVIFSMEEG…DTSVLQWRVA (640 aa)) is tandem atypical propeller in EMLs. 12 WD repeats span residues 56–93 (KLDW…LYSV), 97–144 (RQRH…VWDS), 151–192 (HVLG…VWDW), 195–234 (ESKV…FWSL), 241–280 (KRQG…VWGK), 285–323 (ITQE…LWGS), 369–406 (FSLL…LWSS), 410–447 (QPVW…LLDT), 452–489 (LVAI…VYTV), 495–535 (KVSR…YWDP), 564–602 (FGIW…LFSY), and 609–648 (ALSH…QWRV). A coiled-coil region spans residues 65–106 (GRDCRANLYLLPTGEVVYFVASVAVLYSVEEQRQRHYLGHND).

This sequence belongs to the WD repeat EMAP family. In terms of assembly, interacts with GRID2 and may also interact with GRID1. Interacts with EML3. Binds unpolymerized tubulins via its WD repeat region.

The protein resides in the cytoplasm. Its subcellular location is the cytoskeleton. It is found in the spindle. In terms of biological role, tubulin binding protein that inhibits microtubule nucleation and growth, resulting in shorter microtubules. In Mus musculus (Mouse), this protein is Echinoderm microtubule-associated protein-like 2 (Eml2).